Here is a 317-residue protein sequence, read N- to C-terminus: Beta-ketoacyl-[acyl-carrier-protein] synthase III (317 aa).

Catalysis depends on residues Cys-112 and His-244. Positions 245 to 249 (QANLR) are ACP-binding. Asn-274 is a catalytic residue.

It belongs to the thiolase-like superfamily. FabH family. As to quaternary structure, homodimer.

It is found in the cytoplasm. The enzyme catalyses malonyl-[ACP] + acetyl-CoA + H(+) = 3-oxobutanoyl-[ACP] + CO2 + CoA. It participates in lipid metabolism; fatty acid biosynthesis. Functionally, catalyzes the condensation reaction of fatty acid synthesis by the addition to an acyl acceptor of two carbons from malonyl-ACP. Catalyzes the first condensation reaction which initiates fatty acid synthesis and may therefore play a role in governing the total rate of fatty acid production. Possesses both acetoacetyl-ACP synthase and acetyl transacylase activities. Its substrate specificity determines the biosynthesis of branched-chain and/or straight-chain of fatty acids. This is Beta-ketoacyl-[acyl-carrier-protein] synthase III from Shigella dysenteriae serotype 1 (strain Sd197).